Here is a 154-residue protein sequence, read N- to C-terminus: Putative pre-16S rRNA nuclease (154 aa).

The protein belongs to the YqgF nuclease family.

It localises to the cytoplasm. Its function is as follows. Could be a nuclease involved in processing of the 5'-end of pre-16S rRNA. The chain is Putative pre-16S rRNA nuclease from Rickettsia felis (strain ATCC VR-1525 / URRWXCal2) (Rickettsia azadi).